The sequence spans 769 residues: DNA helicase/primase complex-associated protein (769 aa).

This sequence belongs to the herpesviridae HEPA family. Associates with the primase and the helicase to form the helicase-primase complex. Interacts with the origin-binding protein. Interacts with the polymerase catalytic subunit.

Its subcellular location is the host nucleus. Functionally, component of the helicase/primase complex. Unwinds the DNA at the replication forks and generates single-stranded DNA for both leading and lagging strand synthesis. The primase synthesizes short RNA primers on the lagging strand that the polymerase presumably elongates using dNTPs. The primase-associated factor has no known catalytic activity in the complex and may serve to facilitate the formation of the replisome by directly interacting with the origin-binding protein and the polymerase. The sequence is that of DNA helicase/primase complex-associated protein (MDV020) from Gallus gallus (Chicken).